The primary structure comprises 456 residues: Probable hexose phosphate transport protein (456 aa).

A run of 11 helical transmembrane segments spans residues 34-54, 70-90, 113-133, 161-181, 185-205, 257-277, 302-322, 331-351, 362-382, 394-414, and 421-441; these read IFYS…SFTF, LGII…VSGV, IFFG…INGW, VWST…GIAI, GWRG…FILI, YVLS…IYVV, LCVS…GWLS, GPMN…LWGT, AFLF…GLAA, ASGF…YPLG, and GWHG…LFFL.

This sequence belongs to the major facilitator superfamily. Organophosphate:Pi antiporter (OPA) (TC 2.A.1.4) family.

Its subcellular location is the cell membrane. Its function is as follows. Transport protein for sugar phosphate uptake. This chain is Probable hexose phosphate transport protein, found in Chlamydia muridarum (strain MoPn / Nigg).